The following is a 210-amino-acid chain: 7-methyl-GTP pyrophosphatase (210 aa).

Asp79 serves as the catalytic Proton acceptor.

This sequence belongs to the Maf family. YceF subfamily. It depends on a divalent metal cation as a cofactor.

The protein localises to the cytoplasm. It carries out the reaction N(7)-methyl-GTP + H2O = N(7)-methyl-GMP + diphosphate + H(+). Functionally, nucleoside triphosphate pyrophosphatase that hydrolyzes 7-methyl-GTP (m(7)GTP). May have a dual role in cell division arrest and in preventing the incorporation of modified nucleotides into cellular nucleic acids. The sequence is that of 7-methyl-GTP pyrophosphatase from Burkholderia lata (strain ATCC 17760 / DSM 23089 / LMG 22485 / NCIMB 9086 / R18194 / 383).